A 240-amino-acid chain; its full sequence is Small ribosomal subunit protein uS3 (240 aa).

The region spanning 39–107 (IREFIKEECK…ELHLNIVEVR (69 aa)) is the KH type-2 domain. The segment covering 212 to 222 (PQARDRRHAEL) has biased composition (basic and acidic residues). Positions 212–240 (PQARDRRHAELQEGGGPRPQGGGRPRRDR) are disordered. The span at 224 to 234 (EGGGPRPQGGG) shows a compositional bias: gly residues.

Belongs to the universal ribosomal protein uS3 family. Part of the 30S ribosomal subunit. Forms a tight complex with proteins S10 and S14.

Binds the lower part of the 30S subunit head. Binds mRNA in the 70S ribosome, positioning it for translation. This is Small ribosomal subunit protein uS3 from Dinoroseobacter shibae (strain DSM 16493 / NCIMB 14021 / DFL 12).